A 114-amino-acid chain; its full sequence is MSELGAKYQQLQNELEEFIVARQKLETQLQENKIVNEEFDQLEEDTPVYKLTGNVLLPVEQSEARTNVDKRLEFIETEITRCEKNIRDKQEELEKMRSELIKLNNTAASTGPGR.

Serine 2 carries the post-translational modification N-acetylserine.

Belongs to the prefoldin subunit beta family. As to quaternary structure, heterohexamer of two PFD-alpha type and four PFD-beta type subunits.

Its subcellular location is the nucleus. Its function is as follows. Binds specifically to cytosolic chaperonin (c-CPN) and transfers target proteins to it. Binds to nascent polypeptide chain and promotes folding in an environment in which there are many competing pathways for nonnative proteins. The protein is Prefoldin subunit 6 (YKE2) of Saccharomyces cerevisiae (strain ATCC 204508 / S288c) (Baker's yeast).